A 350-amino-acid polypeptide reads, in one-letter code: tRNA N6-adenosine threonylcarbamoyltransferase (350 aa).

Residues histidine 109 and histidine 113 each contribute to the Fe cation site. Substrate is bound by residues 136 to 140, aspartate 169, glycine 182, aspartate 186, and asparagine 284; that span reads TVSGG. Aspartate 312 lines the Fe cation pocket.

It belongs to the KAE1 / TsaD family. The cofactor is Fe(2+).

It is found in the cytoplasm. The catalysed reaction is L-threonylcarbamoyladenylate + adenosine(37) in tRNA = N(6)-L-threonylcarbamoyladenosine(37) in tRNA + AMP + H(+). Its function is as follows. Required for the formation of a threonylcarbamoyl group on adenosine at position 37 (t(6)A37) in tRNAs that read codons beginning with adenine. Is involved in the transfer of the threonylcarbamoyl moiety of threonylcarbamoyl-AMP (TC-AMP) to the N6 group of A37, together with TsaE and TsaB. TsaD likely plays a direct catalytic role in this reaction. The polypeptide is tRNA N6-adenosine threonylcarbamoyltransferase (Chlorobium chlorochromatii (strain CaD3)).